We begin with the raw amino-acid sequence, 190 residues long: Imidazoleglycerol-phosphate dehydratase (190 aa).

The protein belongs to the imidazoleglycerol-phosphate dehydratase family.

The protein resides in the cytoplasm. The catalysed reaction is D-erythro-1-(imidazol-4-yl)glycerol 3-phosphate = 3-(imidazol-4-yl)-2-oxopropyl phosphate + H2O. It functions in the pathway amino-acid biosynthesis; L-histidine biosynthesis; L-histidine from 5-phospho-alpha-D-ribose 1-diphosphate: step 6/9. The protein is Imidazoleglycerol-phosphate dehydratase of Wolinella succinogenes (strain ATCC 29543 / DSM 1740 / CCUG 13145 / JCM 31913 / LMG 7466 / NCTC 11488 / FDC 602W) (Vibrio succinogenes).